We begin with the raw amino-acid sequence, 624 residues long: DNA mismatch repair protein MutL (624 aa).

It belongs to the DNA mismatch repair MutL/HexB family.

In terms of biological role, this protein is involved in the repair of mismatches in DNA. It is required for dam-dependent methyl-directed DNA mismatch repair. May act as a 'molecular matchmaker', a protein that promotes the formation of a stable complex between two or more DNA-binding proteins in an ATP-dependent manner without itself being part of a final effector complex. The chain is DNA mismatch repair protein MutL from Chlorobium phaeobacteroides (strain DSM 266 / SMG 266 / 2430).